A 491-amino-acid polypeptide reads, in one-letter code: Probable ribonuclease FAU-1 (491 aa).

This sequence belongs to the FAU-1 family.

In terms of biological role, probable RNase involved in rRNA stability through maturation and/or degradation of precursor rRNAs. Binds to RNA in loop regions with AU-rich sequences. The polypeptide is Probable ribonuclease FAU-1 (Thermofilum pendens (strain DSM 2475 / Hrk 5)).